A 124-amino-acid polypeptide reads, in one-letter code: Darcynin homolog (124 aa).

The protein belongs to the darcynin family.

This Granulibacter bethesdensis (strain ATCC BAA-1260 / CGDNIH1) protein is Darcynin homolog.